We begin with the raw amino-acid sequence, 388 residues long: Ribonuclease D (388 aa).

In terms of domain architecture, 3'-5' exonuclease spans 24 to 191; it reads QYVSDEASLN…LYPQLADKLK (168 aa). Positions 230 to 310 constitute an HRDC domain; the sequence is TEHQLAYLKV…QTADLSNPPE (81 aa).

It belongs to the RNase D family. The cofactor is a divalent metal cation.

The protein localises to the cytoplasm. It carries out the reaction Exonucleolytic cleavage that removes extra residues from the 3'-terminus of tRNA to produce 5'-mononucleotides.. Its function is as follows. Exonuclease involved in the 3' processing of various precursor tRNAs. Initiates hydrolysis at the 3'-terminus of an RNA molecule and releases 5'-mononucleotides. This Shewanella sp. (strain ANA-3) protein is Ribonuclease D.